A 120-amino-acid chain; its full sequence is Aspartate 1-decarboxylase (120 aa).

S25 acts as the Schiff-base intermediate with substrate; via pyruvic acid in catalysis. S25 is modified (pyruvic acid (Ser)). T57 contacts substrate. Y58 (proton donor) is an active-site residue. 73-75 (GAA) is a binding site for substrate.

Belongs to the PanD family. In terms of assembly, heterooctamer of four alpha and four beta subunits. It depends on pyruvate as a cofactor. In terms of processing, is synthesized initially as an inactive proenzyme, which is activated by self-cleavage at a specific serine bond to produce a beta-subunit with a hydroxyl group at its C-terminus and an alpha-subunit with a pyruvoyl group at its N-terminus.

It is found in the cytoplasm. It carries out the reaction L-aspartate + H(+) = beta-alanine + CO2. The protein operates within cofactor biosynthesis; (R)-pantothenate biosynthesis; beta-alanine from L-aspartate: step 1/1. Catalyzes the pyruvoyl-dependent decarboxylation of aspartate to produce beta-alanine. This is Aspartate 1-decarboxylase from Thermus thermophilus (strain ATCC 27634 / DSM 579 / HB8).